The following is a 621-amino-acid chain: Protein CASP (621 aa).

At M1 to V574 the chain is on the cytoplasmic side. Coiled-coil stretches lie at residues L101–I445 and I473–S525. The chain crosses the membrane as a helical; Anchor for type IV membrane protein span at residues F575–F595. At D596 to Q621 the chain is on the lumenal side.

This sequence belongs to the CASP family.

The protein resides in the golgi apparatus membrane. Its function is as follows. May be involved in intra-Golgi retrograde transport. The protein is Protein CASP (ceh-44) of Caenorhabditis elegans.